Here is a 251-residue protein sequence, read N- to C-terminus: Hydroxyacylglutathione hydrolase (251 aa).

Zn(2+)-binding residues include histidine 53, histidine 55, aspartate 57, histidine 58, histidine 110, aspartate 127, and histidine 165.

The protein belongs to the metallo-beta-lactamase superfamily. Glyoxalase II family. Monomer. Zn(2+) is required as a cofactor.

It catalyses the reaction an S-(2-hydroxyacyl)glutathione + H2O = a 2-hydroxy carboxylate + glutathione + H(+). It participates in secondary metabolite metabolism; methylglyoxal degradation; (R)-lactate from methylglyoxal: step 2/2. Its function is as follows. Thiolesterase that catalyzes the hydrolysis of S-D-lactoyl-glutathione to form glutathione and D-lactic acid. The polypeptide is Hydroxyacylglutathione hydrolase (Escherichia coli O6:K15:H31 (strain 536 / UPEC)).